The sequence spans 159 residues: Cyclic pyranopterin monophosphate synthase (159 aa).

Residues 76-78 (LCH) and 114-115 (ME) contribute to the substrate site. Asp129 is an active-site residue.

This sequence belongs to the MoaC family. In terms of assembly, homohexamer; trimer of dimers.

The enzyme catalyses (8S)-3',8-cyclo-7,8-dihydroguanosine 5'-triphosphate = cyclic pyranopterin phosphate + diphosphate. Its pathway is cofactor biosynthesis; molybdopterin biosynthesis. Functionally, catalyzes the conversion of (8S)-3',8-cyclo-7,8-dihydroguanosine 5'-triphosphate to cyclic pyranopterin monophosphate (cPMP). The chain is Cyclic pyranopterin monophosphate synthase from Psychromonas ingrahamii (strain DSM 17664 / CCUG 51855 / 37).